Here is a 352-residue protein sequence, read N- to C-terminus: 4-hydroxy-2-oxovalerate aldolase (352 aa).

Positions 13 to 265 constitute a Pyruvate carboxyltransferase domain; that stretch reads VRLTDTSLRD…KTGIDFFDIA (253 aa). 21–22 is a substrate binding site; sequence RD. Asp-22 is a Mn(2+) binding site. The active-site Proton acceptor is His-25. Ser-175 and His-204 together coordinate substrate. Positions 204 and 206 each coordinate Mn(2+). Tyr-295 serves as a coordination point for substrate.

The protein belongs to the 4-hydroxy-2-oxovalerate aldolase family.

It catalyses the reaction (S)-4-hydroxy-2-oxopentanoate = acetaldehyde + pyruvate. The chain is 4-hydroxy-2-oxovalerate aldolase from Mycolicibacterium paratuberculosis (strain ATCC BAA-968 / K-10) (Mycobacterium paratuberculosis).